The following is a 663-amino-acid chain: DNA topoisomerase 4 subunit B (663 aa).

Residues Tyr7, Asn47, Asp74, 114 to 120 (GLHGVGA), and Lys341 each bind ATP. The interval 386-418 (REAARKAREDARSGKKNKRKDTLLSGKLTPAQS) is disordered. A compositionally biased stretch (basic and acidic residues) spans 387–398 (EAARKAREDARS). Residues 424–538 (NELYLVEGDS…AGRVFIALPP (115 aa)) form the Toprim domain. Residues Glu430, Asp503, and Asp505 each contribute to the Mg(2+) site.

The protein belongs to the type II topoisomerase family. ParE type 2 subfamily. Heterotetramer composed of ParC and ParE. It depends on Mg(2+) as a cofactor. Mn(2+) is required as a cofactor. Requires Ca(2+) as cofactor.

It carries out the reaction ATP-dependent breakage, passage and rejoining of double-stranded DNA.. In terms of biological role, topoisomerase IV is essential for chromosome segregation. It relaxes supercoiled DNA. Performs the decatenation events required during the replication of a circular DNA molecule. The protein is DNA topoisomerase 4 subunit B of Staphylococcus aureus (strain MRSA252).